Consider the following 503-residue polypeptide: Probable cytosol aminopeptidase (503 aa).

Mn(2+) contacts are provided by Lys-270 and Asp-275. Lys-282 is a catalytic residue. Asp-293, Asp-352, and Glu-354 together coordinate Mn(2+). Arg-356 is a catalytic residue.

This sequence belongs to the peptidase M17 family. Mn(2+) is required as a cofactor.

The protein resides in the cytoplasm. It catalyses the reaction Release of an N-terminal amino acid, Xaa-|-Yaa-, in which Xaa is preferably Leu, but may be other amino acids including Pro although not Arg or Lys, and Yaa may be Pro. Amino acid amides and methyl esters are also readily hydrolyzed, but rates on arylamides are exceedingly low.. The enzyme catalyses Release of an N-terminal amino acid, preferentially leucine, but not glutamic or aspartic acids.. In terms of biological role, presumably involved in the processing and regular turnover of intracellular proteins. Catalyzes the removal of unsubstituted N-terminal amino acids from various peptides. The sequence is that of Probable cytosol aminopeptidase from Escherichia fergusonii (strain ATCC 35469 / DSM 13698 / CCUG 18766 / IAM 14443 / JCM 21226 / LMG 7866 / NBRC 102419 / NCTC 12128 / CDC 0568-73).